The primary structure comprises 417 residues: Serine hydroxymethyltransferase 1 (417 aa).

Residues Leu121 and 125–127 (GHL) contribute to the (6S)-5,6,7,8-tetrahydrofolate site. The residue at position 229 (Lys229) is an N6-(pyridoxal phosphate)lysine. Residue 354–356 (SPF) participates in (6S)-5,6,7,8-tetrahydrofolate binding.

It belongs to the SHMT family. Homodimer. Requires pyridoxal 5'-phosphate as cofactor.

It localises to the cytoplasm. It carries out the reaction (6R)-5,10-methylene-5,6,7,8-tetrahydrofolate + glycine + H2O = (6S)-5,6,7,8-tetrahydrofolate + L-serine. It functions in the pathway one-carbon metabolism; tetrahydrofolate interconversion. It participates in amino-acid biosynthesis; glycine biosynthesis; glycine from L-serine: step 1/1. Functionally, catalyzes the reversible interconversion of serine and glycine with tetrahydrofolate (THF) serving as the one-carbon carrier. This reaction serves as the major source of one-carbon groups required for the biosynthesis of purines, thymidylate, methionine, and other important biomolecules. Also exhibits THF-independent aldolase activity toward beta-hydroxyamino acids, producing glycine and aldehydes, via a retro-aldol mechanism. In Pseudomonas fluorescens (strain ATCC BAA-477 / NRRL B-23932 / Pf-5), this protein is Serine hydroxymethyltransferase 1.